The primary structure comprises 273 residues: Cytoplasmic phosphatidylinositol transfer protein 1 (273 aa).

Residues 244–273 are disordered; that stretch reads QAETNEKIHNTSGGANAAANAKEANDGDID.

This sequence belongs to the PtdIns transfer protein family. PI transfer class IIB subfamily.

In terms of biological role, phosphatidylinositol transfer proteins mediate the monomeric transport of lipids by shielding a lipid from the aqueous environment and binding the lipid in a hydrophobic cavity. This chain is Cytoplasmic phosphatidylinositol transfer protein 1 (rdgBbeta), found in Drosophila melanogaster (Fruit fly).